We begin with the raw amino-acid sequence, 63 residues long: Large ribosomal subunit protein bL28 (63 aa).

The disordered stretch occupies residues 1–20; sequence MSRRCAITGKGPMVGNNVSH.

The protein belongs to the bacterial ribosomal protein bL28 family.

The chain is Large ribosomal subunit protein bL28 from Campylobacter curvus (strain 525.92).